Reading from the N-terminus, the 177-residue chain is Large ribosomal subunit protein uL6 (177 aa).

It belongs to the universal ribosomal protein uL6 family. In terms of assembly, part of the 50S ribosomal subunit.

Functionally, this protein binds to the 23S rRNA, and is important in its secondary structure. It is located near the subunit interface in the base of the L7/L12 stalk, and near the tRNA binding site of the peptidyltransferase center. This chain is Large ribosomal subunit protein uL6, found in Shewanella baltica (strain OS223).